The chain runs to 504 residues: Deoxyguanosinetriphosphate triphosphohydrolase (504 aa).

One can recognise an HD domain in the interval 66 to 273 (RLTHSMEVQQ…MEAADDISYC (208 aa)).

Belongs to the dGTPase family. Type 1 subfamily. In terms of assembly, homotetramer. It depends on Mg(2+) as a cofactor.

The catalysed reaction is dGTP + H2O = 2'-deoxyguanosine + triphosphate + H(+). DGTPase preferentially hydrolyzes dGTP over the other canonical NTPs. This Enterobacter sp. (strain 638) protein is Deoxyguanosinetriphosphate triphosphohydrolase.